Here is a 1257-residue protein sequence, read N- to C-terminus: Bifunctional autolysin (1257 aa).

An N-terminal signal peptide occupies residues 1–29 (MAKKFNYKLPSMVALTLVGSAVTAHQVQA). A compositionally biased stretch (polar residues) spans 99–137 (QVNGDTRATQSTTSNNAKPVTKSTNTTAPKTNNNVTSAG). Disordered regions lie at residues 99–150 (QVNG…NSEN), 173–217 (AAPK…KYKP), and 417–441 (TQST…PSTG). Composition is skewed to low complexity over residues 173 to 208 (AAPK…AAAP) and 419 to 440 (STTT…TPST). The segment at 197-776 (ASAQPRSAAA…AVAQPKTAVK (580 aa)) is N-acetylmuramoyl-L-alanine amidase. GW domains follow at residues 444–518 (TVAA…YNTA), 520–594 (SPVN…DTAK), 613–687 (TVSS…YNNA), 689–763 (SPVN…VPAA), 785–860 (TTQT…VQNL), 862–937 (KEVK…APTA), and 944–1018 (AAKD…KELI). An endo-beta-N-acetylglucosaminidase region spans residues 777-1257 (AYAVTKPQTT…GKYFDIPQYK (481 aa)).

In the N-terminal section; belongs to the N-acetylmuramoyl-L-alanine amidase 2 family. The protein in the C-terminal section; belongs to the glycosyl hydrolase 73 family. As to quaternary structure, oligomer; forms a ring structure at the cell surface which is important for efficient partitioning of daughter cells after cell division. Undergoes proteolytic processing to generate the two extracellular lytic enzymes, probably at the septal region on the cell surface.

It is found in the secreted. It carries out the reaction Hydrolyzes the link between N-acetylmuramoyl residues and L-amino acid residues in certain cell-wall glycopeptides.. It catalyses the reaction an N(4)-(oligosaccharide-(1-&gt;3)-[oligosaccharide-(1-&gt;6)]-beta-D-Man-(1-&gt;4)-beta-D-GlcNAc-(1-&gt;4)-alpha-D-GlcNAc)-L-asparaginyl-[protein] + H2O = an oligosaccharide-(1-&gt;3)-[oligosaccharide-(1-&gt;6)]-beta-D-Man-(1-&gt;4)-D-GlcNAc + N(4)-(N-acetyl-beta-D-glucosaminyl)-L-asparaginyl-[protein]. Endohydrolysis of the di-N-acetylchitobiosyl unit in high-mannose glycopeptides and glycoproteins containing the -[(Man)5(GlcNAc)2]-Asn structure. One N-acetyl-D-glucosamine residue remains attached to the protein; the rest of the oligosaccharide is released intact. Cleaves the peptidoglycan connecting the daughter cells at the end of the cell division cycle, resulting in the separation of the two newly divided cells. Acts as an autolysin in penicillin-induced lysis. This Staphylococcus aureus (strain MRSA252) protein is Bifunctional autolysin (atl).